A 312-amino-acid polypeptide reads, in one-letter code: Polyhedral envelope protein (312 aa).

This sequence belongs to the baculoviridae PE family.

The protein resides in the virion membrane. Major component of the polyhedra envelope. The protein is Polyhedral envelope protein of Lymantria dispar multicapsid nuclear polyhedrosis virus (LdMNPV).